The following is a 372-amino-acid chain: Glutamate 5-kinase (372 aa).

K14 is a binding site for ATP. 3 residues coordinate substrate: S54, D141, and N153. 173 to 174 contacts ATP; it reads TD. The PUA domain occupies 280 to 358; sequence RGTLVLDAGA…DAIESLLGYS (79 aa).

This sequence belongs to the glutamate 5-kinase family.

It is found in the cytoplasm. It catalyses the reaction L-glutamate + ATP = L-glutamyl 5-phosphate + ADP. The protein operates within amino-acid biosynthesis; L-proline biosynthesis; L-glutamate 5-semialdehyde from L-glutamate: step 1/2. Functionally, catalyzes the transfer of a phosphate group to glutamate to form L-glutamate 5-phosphate. This is Glutamate 5-kinase from Pseudomonas putida (strain W619).